The primary structure comprises 835 residues: Protein translocase subunit SecA (835 aa).

ATP is bound by residues Q85, 103–107 (GEGKT), and D492. Residues 788-807 (VQGEAVHPSSDGEEAKKKPV) are disordered. Residues C819, C821, C830, and C831 each coordinate Zn(2+).

It belongs to the SecA family. As to quaternary structure, monomer and homodimer. Part of the essential Sec protein translocation apparatus which comprises SecA, SecYEG and auxiliary proteins SecDF. Other proteins may also be involved. Zn(2+) is required as a cofactor.

The protein resides in the cell membrane. The protein localises to the cytoplasm. The catalysed reaction is ATP + H2O + cellular proteinSide 1 = ADP + phosphate + cellular proteinSide 2.. Its function is as follows. Part of the Sec protein translocase complex. Interacts with the SecYEG preprotein conducting channel. Has a central role in coupling the hydrolysis of ATP to the transfer of proteins into and across the cell membrane, serving as an ATP-driven molecular motor driving the stepwise translocation of polypeptide chains across the membrane. This is Protein translocase subunit SecA from Bacillus cereus (strain G9842).